The primary structure comprises 177 residues: Gamma-crystallin M1-2 (177 aa).

Beta/gamma crystallin 'Greek key' domains are found at residues 2-40 (GKII…RVEN) and 41-83 (GCWM…RLLS). The interval 84–90 (QNLGIGT) is connecting peptide. Beta/gamma crystallin 'Greek key' domains follow at residues 91-131 (NKLR…NVLD) and 132-174 (GYWI…RRVI).

It belongs to the beta/gamma-crystallin family. In terms of assembly, monomer.

Functionally, crystallins are the dominant structural components of the vertebrate eye lens. The protein is Gamma-crystallin M1-2 of Aquarana catesbeiana (American bullfrog).